Consider the following 499-residue polypeptide: Protein nucleotidyltransferase YdiU (499 aa).

G95, G97, R98, K117, D129, G130, R180, and R187 together coordinate ATP. D256 functions as the Proton acceptor in the catalytic mechanism. Mg(2+) is bound by residues N257 and D266. D266 serves as a coordination point for ATP.

This sequence belongs to the SELO family. Requires Mg(2+) as cofactor. Mn(2+) is required as a cofactor.

The enzyme catalyses L-seryl-[protein] + ATP = 3-O-(5'-adenylyl)-L-seryl-[protein] + diphosphate. The catalysed reaction is L-threonyl-[protein] + ATP = 3-O-(5'-adenylyl)-L-threonyl-[protein] + diphosphate. It catalyses the reaction L-tyrosyl-[protein] + ATP = O-(5'-adenylyl)-L-tyrosyl-[protein] + diphosphate. It carries out the reaction L-histidyl-[protein] + UTP = N(tele)-(5'-uridylyl)-L-histidyl-[protein] + diphosphate. The enzyme catalyses L-seryl-[protein] + UTP = O-(5'-uridylyl)-L-seryl-[protein] + diphosphate. The catalysed reaction is L-tyrosyl-[protein] + UTP = O-(5'-uridylyl)-L-tyrosyl-[protein] + diphosphate. Its function is as follows. Nucleotidyltransferase involved in the post-translational modification of proteins. It can catalyze the addition of adenosine monophosphate (AMP) or uridine monophosphate (UMP) to a protein, resulting in modifications known as AMPylation and UMPylation. The polypeptide is Protein nucleotidyltransferase YdiU (Dechloromonas aromatica (strain RCB)).